The chain runs to 473 residues: tRNA-2-methylthio-N(6)-dimethylallyladenosine synthase (473 aa).

Residues 5–125 (RKLHIKSFGC…LPQLLAEAAR (121 aa)) enclose the MTTase N-terminal domain. Residues Cys-14, Cys-50, Cys-88, Cys-166, Cys-170, and Cys-173 each coordinate [4Fe-4S] cluster. The Radical SAM core domain maps to 152–384 (RARGISAFVT…QELIDSQQAA (233 aa)). The 63-residue stretch at 387-449 (AAVIGTTVEV…RYSLIGELAA (63 aa)) folds into the TRAM domain. Residues 452–473 (QHSGFATRSEDSPQSLPITTGA) form a disordered region.

This sequence belongs to the methylthiotransferase family. MiaB subfamily. In terms of assembly, monomer. Requires [4Fe-4S] cluster as cofactor.

The protein resides in the cytoplasm. It carries out the reaction N(6)-dimethylallyladenosine(37) in tRNA + (sulfur carrier)-SH + AH2 + 2 S-adenosyl-L-methionine = 2-methylsulfanyl-N(6)-dimethylallyladenosine(37) in tRNA + (sulfur carrier)-H + 5'-deoxyadenosine + L-methionine + A + S-adenosyl-L-homocysteine + 2 H(+). In terms of biological role, catalyzes the methylthiolation of N6-(dimethylallyl)adenosine (i(6)A), leading to the formation of 2-methylthio-N6-(dimethylallyl)adenosine (ms(2)i(6)A) at position 37 in tRNAs that read codons beginning with uridine. The chain is tRNA-2-methylthio-N(6)-dimethylallyladenosine synthase from Rhodopseudomonas palustris (strain BisB18).